The sequence spans 490 residues: Betaine aldehyde dehydrogenase (490 aa).

K(+) is bound at residue Asp93. 150–152 (GAW) lines the NAD(+) pocket. Lys162 (charge relay system) is an active-site residue. 176 to 179 (KPSE) provides a ligand contact to NAD(+). Val180 contributes to the K(+) binding site. 230–233 (GIAS) provides a ligand contact to NAD(+). Leu246 contributes to the K(+) binding site. Residue Glu252 is the Proton acceptor of the active site. Gly254, Cys286, and Glu387 together coordinate NAD(+). The Nucleophile role is filled by Cys286. The residue at position 286 (Cys286) is a Cysteine sulfenic acid (-SOH). K(+) is bound by residues Lys457 and Gly460. Glu464 functions as the Charge relay system in the catalytic mechanism.

This sequence belongs to the aldehyde dehydrogenase family. In terms of assembly, dimer of dimers. K(+) is required as a cofactor.

It carries out the reaction betaine aldehyde + NAD(+) + H2O = glycine betaine + NADH + 2 H(+). It participates in amine and polyamine biosynthesis; betaine biosynthesis via choline pathway; betaine from betaine aldehyde: step 1/1. Involved in the biosynthesis of the osmoprotectant glycine betaine. Catalyzes the irreversible oxidation of betaine aldehyde to the corresponding acid. The chain is Betaine aldehyde dehydrogenase from Yersinia pseudotuberculosis serotype IB (strain PB1/+).